The chain runs to 194 residues: Serine/threonine-protein kinase mos (194 aa).

The Protein kinase domain maps to 47–194; the sequence is LCLLNLLGSG…HLDLKPANIF (148 aa). ATP is bound by residues 53–61 and lysine 74; that span reads LGSGGFGSV. The Proton acceptor role is filled by aspartate 187.

The protein belongs to the protein kinase superfamily. Ser/Thr protein kinase family.

The enzyme catalyses L-seryl-[protein] + ATP = O-phospho-L-seryl-[protein] + ADP + H(+). It carries out the reaction L-threonyl-[protein] + ATP = O-phospho-L-threonyl-[protein] + ADP + H(+). The protein is Serine/threonine-protein kinase mos (MOS) of Dendroaspis angusticeps (Eastern green mamba).